The chain runs to 275 residues: MTEVISKTSLFLGACGNHHRVDDFSFSPVSFGGFGLKKSFSCLKLKSQKPLRSVFYGKQIVFGDSQDESFRRSSAITAQTTLRIGTAQKWWEKGLKDNMREISSAQELVDSLTNAGDKLVVVDFFSPGCGGCKALHPKICQFAEMNPDVQFLQVNYEEHKSMCYSLGVHVLPFFRFYRGSQGRVCSFSCTNATIKKFRDALAKHGPDRCSLGPTKGLEEKELVALAANKELNFTYTPKPVPVEKEAATPDSNPSLPVPLPSMSSNDEKTLVSAGR.

Residues 1–72 (MTEVISKTSL…GDSQDESFRR (72 aa)) constitute a chloroplast transit peptide. Residues 73–206 (SSAITAQTTL…FRDALAKHGP (134 aa)) form the Thioredoxin domain. Active-site nucleophile residues include Cys129 and Cys132. An intrachain disulfide couples Cys129 to Cys132. Residues 238–275 (KPVPVEKEAATPDSNPSLPVPLPSMSSNDEKTLVSAGR) form a disordered region. A compositionally biased stretch (low complexity) spans 249 to 264 (PDSNPSLPVPLPSMSS).

This sequence belongs to the thioredoxin family.

It is found in the plastid. It localises to the chloroplast. Functionally, thiol-disulfide oxidoreductase that may participate in various redox reactions. Possesses insulin disulfide bonds reducing activity. In Arabidopsis thaliana (Mouse-ear cress), this protein is Thioredoxin-like 1-1, chloroplastic.